We begin with the raw amino-acid sequence, 770 residues long: Amyloid-beta precursor protein (770 aa).

The first 17 residues, 1-17 (MLPGLALLLLAAWTARA), serve as a signal peptide directing secretion. Residues 18–701 (LEVPTDGNAG…AEDVGSNKGA (684 aa)) lie on the Extracellular side of the membrane. The interval 28–123 (LLAEPQIAMF…PYRCLVGEFV (96 aa)) is GFLD subdomain. The 162-residue stretch at 28–189 (LLAEPQIAMF…RGVEFVCCPL (162 aa)) folds into the E1 domain. Cystine bridges form between Cys-38–Cys-62, Cys-73–Cys-117, Cys-98–Cys-105, Cys-133–Cys-187, Cys-144–Cys-174, and Cys-158–Cys-186. 96-110 (NWCKRGRKQCKTHPH) is a binding site for heparin. The tract at residues 131-189 (DKCKFLHQERMDVCETHLHWHTVAKETCSEKSTNLHDYGMLLPCGIDKFRGVEFVCCPL) is cuBD subdomain. Residues His-147, His-151, and Tyr-168 each coordinate Cu(2+). The tract at residues 181–188 (GVEFVCCP) is zinc-binding. Zn(2+)-binding residues include Glu-183, Cys-186, and Cys-187. Residues 194–207 (DNVDSADAEEDDSD) are compositionally biased toward acidic residues. Residues 194–284 (DNVDSADAEE…TTTTTTESVE (91 aa)) form a disordered region. Residue Ser-198 is modified to Phosphoserine; by CK2. Ser-206 carries the phosphoserine; by CK1 modification. 2 positions are modified to sulfotyrosine: Tyr-217 and Tyr-262. Residues 228-264 (VAEEEEVAEVEEEEADDDEDDEDGDEVEEEAEEPYEE) are compositionally biased toward acidic residues. A compositionally biased stretch (low complexity) spans 268 to 281 (RTTSIATTTTTTTE). 3 disulfide bridges follow: Cys-291-Cys-341, Cys-300-Cys-324, and Cys-316-Cys-337. The 51-residue stretch at 291 to 341 (CSEQAETGPCRAMISRWYFDVTEGKCAPFFYGGCGGNRNNFDTEEYCMAVC) folds into the BPTI/Kunitz inhibitor domain. Sulfotyrosine is present on Tyr-336. Residues 344 to 365 (VMSQSLLKTTQEPLARDPVKLP) carry the OX-2 motif. Residues 374-565 (AVDKYLETPG…EEIQDEVDEL (192 aa)) enclose the E2 domain. Residues 391 to 423 (FQKAKERLEAKHRERMSQVMREWEEAERQAKNL) are heparin-binding. At Ser-441 the chain carries Phosphoserine. The interval 491-522 (FNMLKKYVRAEQKDRQHTLKHFEHVRMVDPKK) is heparin-binding. The residue at position 497 (Tyr-497) is a Phosphotyrosine. The segment at 523–540 (AAQIRSQVMTHLRVIYER) is collagen-binding. Asn-542 and Asn-571 each carry an N-linked (GlcNAc...) asparagine glycan. Cu(2+) is bound by residues His-677, Tyr-681, His-684, and His-685. Zn(2+)-binding residues include His-677, Tyr-681, His-684, and His-685. The interval 695–722 (VGSNKGAIIGLMVGGVVIATVIVITLVM) is interaction with PSEN1. A helical membrane pass occupies residues 702–722 (IIGLMVGGVVIATVIVITLVM). Topologically, residues 723–770 (LKKKQYTSIHHGVVEVDAAVTPEERHLSKMQQNGYENPTYKFFEQMQN) are cytoplasmic. Residues 724–734 (KKKQYTSIHHG) carry the Basolateral sorting signal motif. Residue Thr-729 is modified to Phosphothreonine. Ser-730 bears the Phosphoserine; by APP-kinase I mark. The tract at residues 732-751 (HHGVVEVDAAVTPEERHLSK) is interaction with G(o)-alpha. Position 743 is a phosphothreonine; by CDK5 and MAPK10 (Thr-743). The tract at residues 756-770 (GYENPTYKFFEQMQN) is required for the interaction with KIF5B and for anterograde transport in axons. The residue at position 757 (Tyr-757) is a Phosphotyrosine; by ABL1. The short motif at 757–762 (YENPTY) is the YENPXY motif; contains endocytosis signal element. Lys-763 is covalently cross-linked (Glycyl lysine isopeptide (Lys-Gly) (interchain with G-Cter in ubiquitin)).

It belongs to the APP family. As to quaternary structure, binds, via its C-terminus, to the PID domain of several cytoplasmic proteins, including APBB family members, the APBA family, MAPK8IP1, SHC1 and NUMB and DAB1. Binding to DAB1 inhibits its serine phosphorylation. Interacts (via NPXY motif) with DAB2 (via PID domain); the interaction is impaired by tyrosine phosphorylation of the NPXY motif. Also interacts with GPCR-like protein BPP, APPBP1, IB1, KNS2 (via its TPR domains), APPBP2 (via BaSS) and DDB1. In vitro, it binds MAPT via the MT-binding domains. Associates with microtubules in the presence of ATP and in a kinesin-dependent manner. Interacts, through a C-terminal domain, with GNAO1. Amyloid-beta protein 42 binds CHRNA7 in hippocampal neurons. Amyloid-beta associates with HADH2. Interacts with CPEB1, ANKS1B and AGER. Interacts with ITM2B. Interacts with ITM2C. Interacts with IDE. Can form homodimers; dimerization is enhanced in the presence of Cu(2+) ions. Can form homodimers; this is promoted by heparin binding. Amyloid-beta protein 40 interacts with S100A9. CTF-alpha product of APP interacts with GSAP. Interacts with SORL1 (via N-terminal ectodomain); this interaction retains APP in the trans-Golgi network and reduces processing into soluble APP-alpha and amyloid-beta peptides. The C99 fragment also interacts with SORL1. Interacts with PLD3. Interacts with VDAC1. Interacts with NSG1; could regulate APP processing. Amyloid-beta protein 42 interacts with FPR2. Interacts (via transmembrane region) with PSEN1; the interaction is direct. Interacts with LRRK2. Interacts (via cytoplasmic domain) with KIF5B. Interacts (via C-terminus) with APBB2/FE65L1 (via C-terminus). Interacts (via intracellular domain) with APBB3. In terms of processing, proteolytically processed under normal cellular conditions. Cleavage either by alpha-secretase, beta-secretase or theta-secretase leads to generation and extracellular release of soluble APP peptides, S-APP-alpha and S-APP-beta, and the retention of corresponding membrane-anchored C-terminal fragments, C80, C83 and C99. Subsequent processing of C80 and C83 by gamma-secretase yields P3 peptides. This is the major secretory pathway and is non-amyloidogenic. Alternatively, presenilin/nicastrin-mediated gamma-secretase processing of C99 releases the amyloid-beta proteins, amyloid-beta protein 40 and amyloid-beta protein 42, major components of amyloid plaques, and the cytotoxic C-terminal fragments, gamma-CTF(50), gamma-CTF(57) and gamma-CTF(59). PSEN1 cleavage is more efficient with C83 than with C99 as substrate (in vitro). Amyloid-beta protein 40 and Amyloid-beta protein 42 are cleaved by ACE. Many other minor amyloid-beta peptides, amyloid-beta 1-X peptides, are found in cerebral spinal fluid (CSF) including the amyloid-beta X-15 peptides, produced from the cleavage by alpha-secretase. Proteolytically cleaved by caspases during neuronal apoptosis. Cleavage at Asp-739 by either caspase-3, -8 or -9 results in the production of the neurotoxic C31 peptide and the increased production of amyloid-beta peptides. Post-translationally, N- and O-glycosylated. In terms of processing, phosphorylation in the C-terminal on tyrosine, threonine and serine residues is neuron-specific. Phosphorylation can affect APP processing, neuronal differentiation and interaction with other proteins. Phosphorylated on Thr-743 in neuronal cells by Cdc5 kinase and Mapk10, in dividing cells by Cdc2 kinase in a cell-cycle dependent manner with maximal levels at the G2/M phase and, in vitro, by GSK-3-beta. The Thr-743 phosphorylated form causes a conformational change which reduces binding of Fe65 family members. In dopaminergic (DA) neurons, phosphorylation on Thr-743 by LRKK2 promotes the production and the nuclear translocation of the APP intracellular domain (AICD) which induces DA neuron apoptosis. Phosphorylation on Tyr-757 is required for SHC binding. Phosphorylated in the extracellular domain by casein kinases on both soluble and membrane-bound APP. This phosphorylation is inhibited by heparin. Trophic-factor deprivation triggers the cleavage of surface APP by beta-secretase to release sAPP-beta which is further cleaved to release an N-terminal fragment of APP (N-APP). Post-translationally, amyloid-beta peptides are degraded by IDE. In terms of processing, sulfated on tyrosine residues.

It is found in the cell membrane. It localises to the membrane. The protein localises to the perikaryon. Its subcellular location is the cell projection. The protein resides in the growth cone. It is found in the clathrin-coated pit. It localises to the early endosome. The protein localises to the cytoplasmic vesicle. Its subcellular location is the endoplasmic reticulum. The protein resides in the golgi apparatus. It is found in the secreted. It localises to the cell surface. The protein localises to the nucleus. Its subcellular location is the cytoplasm. Functions as a cell surface receptor and performs physiological functions on the surface of neurons relevant to neurite growth, neuronal adhesion and axonogenesis. Interaction between APP molecules on neighboring cells promotes synaptogenesis. Involved in cell mobility and transcription regulation through protein-protein interactions. Can promote transcription activation through binding to APBB1-KAT5 and inhibit Notch signaling through interaction with Numb. Couples to apoptosis-inducing pathways such as those mediated by G(o) and JIP. Inhibits G(o)-alpha ATPase activity. Acts as a kinesin I membrane receptor, mediating the axonal transport of beta-secretase and presenilin 1. By acting as a kinesin I membrane receptor, plays a role in axonal anterograde transport of cargo towards synapses in axons. May be involved in copper homeostasis/oxidative stress through copper ion reduction. In vitro, copper-metallated APP induces neuronal death directly or is potentiated through Cu(2+)-mediated low-density lipoprotein oxidation. Can regulate neurite outgrowth through binding to components of the extracellular matrix such as heparin and collagen I and IV. Induces a AGER-dependent pathway that involves activation of p38 MAPK, resulting in internalization of amyloid-beta peptide and mitochondrial dysfunction in cultured cortical neurons. Provides Cu(2+) ions for GPC1 which are required for release of nitric oxide (NO) and subsequent degradation of the heparan sulfate chains on GPC1. Its function is as follows. Amyloid-beta peptides are lipophilic metal chelators with metal-reducing activity. Binds transient metals such as copper, zinc and iron. In terms of biological role, the gamma-CTF peptides as well as the caspase-cleaved peptides, including C31, are potent enhancers of neuronal apoptosis. This chain is Amyloid-beta precursor protein, found in Pan troglodytes (Chimpanzee).